Here is a 196-residue protein sequence, read N- to C-terminus: Interleukin-18 (196 aa).

Residues 1–29 (MSCEEIAVCAVRLRENLCLYFEELECDAF) constitute a propeptide that is removed on maturation.

It belongs to the IL-1 family. Forms a ternary complex with ligand-binding receptor subunit IL18R1 and signaling receptor subunit IL18RAP at the plasma membrane. Mature IL18 first binds to IL18R1 forming a low affinity binary complex, which then interacts with IL18RAP to form a high affinity ternary complex that signals inside the cell. Interacts with cargo receptor TMED10; the interaction mediates the translocation from the cytoplasm into the ERGIC (endoplasmic reticulum-Golgi intermediate compartment) and thereby secretion. In terms of processing, the pro-IL-18 precursor is processed by CASP1 or CASP4 to yield the active form.

The protein resides in the cytoplasm. It localises to the secreted. Functionally, augments natural killer cell activity in spleen cells and stimulates interferon gamma production in T-helper type I cells. Involved in transduction of inflammation downstream of pyroptosis: its mature form is specifically released in the extracellular milieu by passing through the gasdermin-D (GSDMD) pore. The polypeptide is Interleukin-18 (IL18) (Gallus gallus (Chicken)).